The primary structure comprises 159 residues: MSHNAMEHWKSKLSKTSTSTYVLLAVIAVVFLVTIRRPNGSKGKSSKKRASKKNKKGKNQFEKAPVPLTLEEQIDNVSLRYGNELEGRSKDLINRFDVEDEKDIYERNYCNEMLLKLLIELDSIDLINVDESLRRPLKEKRKGVIKEIQAMLKSLDSLK.

The Perinuclear space segment spans residues 1-12; that stretch reads MSHNAMEHWKSK. Residues 13–35 form a helical; Signal-anchor for type II membrane protein membrane-spanning segment; the sequence is LSKTSTSTYVLLAVIAVVFLVTI. The Cytoplasmic segment spans residues 36-159; the sequence is RRPNGSKGKS…AMLKSLDSLK (124 aa). Residues 39 to 64 form a disordered region; the sequence is NGSKGKSSKKRASKKNKKGKNQFEKA. Over residues 44–58 the composition is skewed to basic residues; sequence KSSKKRASKKNKKGK. The BAG domain maps to 73–159; that stretch reads QIDNVSLRYG…AMLKSLDSLK (87 aa).

In terms of assembly, interacts with the HSP70 family members SSA1, SSA4, and SSB1. These interactions are strongly reduced by ADP and ATP.

The protein localises to the endoplasmic reticulum membrane. The protein resides in the nucleus membrane. Functionally, stimulator of ATPase activity of molecular chaperones of the HSP70 family (principally of the SSA class). Stimulation is important for HSP70-substrate complex dissociation after folding of newly synthesized or refolded proteins. SNL1 is probably involved in nuclear pore biogenesis and in particular the folding or refolding of misfolded NUP116, GLE2 and NIC96. This Saccharomyces cerevisiae (strain ATCC 204508 / S288c) (Baker's yeast) protein is HSP70 co-chaperone SNL1 (SNL1).